The following is a 94-amino-acid chain: Pyrimidine/purine nucleoside phosphorylase (94 aa).

It belongs to the nucleoside phosphorylase PpnP family.

It carries out the reaction a purine D-ribonucleoside + phosphate = a purine nucleobase + alpha-D-ribose 1-phosphate. The catalysed reaction is adenosine + phosphate = alpha-D-ribose 1-phosphate + adenine. The enzyme catalyses cytidine + phosphate = cytosine + alpha-D-ribose 1-phosphate. It catalyses the reaction guanosine + phosphate = alpha-D-ribose 1-phosphate + guanine. It carries out the reaction inosine + phosphate = alpha-D-ribose 1-phosphate + hypoxanthine. The catalysed reaction is thymidine + phosphate = 2-deoxy-alpha-D-ribose 1-phosphate + thymine. The enzyme catalyses uridine + phosphate = alpha-D-ribose 1-phosphate + uracil. It catalyses the reaction xanthosine + phosphate = alpha-D-ribose 1-phosphate + xanthine. In terms of biological role, catalyzes the phosphorolysis of diverse nucleosides, yielding D-ribose 1-phosphate and the respective free bases. Can use uridine, adenosine, guanosine, cytidine, thymidine, inosine and xanthosine as substrates. Also catalyzes the reverse reactions. The protein is Pyrimidine/purine nucleoside phosphorylase of Pseudomonas putida (strain ATCC 700007 / DSM 6899 / JCM 31910 / BCRC 17059 / LMG 24140 / F1).